The primary structure comprises 271 residues: 3-methyl-2-oxobutanoate hydroxymethyltransferase (271 aa).

Mg(2+) contacts are provided by Asp-49 and Asp-88. 3-methyl-2-oxobutanoate is bound by residues 49–50 (DS), Asp-88, and Lys-118. Glu-120 lines the Mg(2+) pocket. Glu-187 functions as the Proton acceptor in the catalytic mechanism.

It belongs to the PanB family. In terms of assembly, homodecamer; pentamer of dimers. Mg(2+) is required as a cofactor.

Its subcellular location is the cytoplasm. The catalysed reaction is 3-methyl-2-oxobutanoate + (6R)-5,10-methylene-5,6,7,8-tetrahydrofolate + H2O = 2-dehydropantoate + (6S)-5,6,7,8-tetrahydrofolate. Its pathway is cofactor biosynthesis; (R)-pantothenate biosynthesis; (R)-pantoate from 3-methyl-2-oxobutanoate: step 1/2. Catalyzes the reversible reaction in which hydroxymethyl group from 5,10-methylenetetrahydrofolate is transferred onto alpha-ketoisovalerate to form ketopantoate. The sequence is that of 3-methyl-2-oxobutanoate hydroxymethyltransferase from Bartonella bacilliformis (strain ATCC 35685 / KC583 / Herrer 020/F12,63).